Consider the following 198-residue polypeptide: Probable chemoreceptor glutamine deamidase CheD (198 aa).

The protein belongs to the CheD family.

The catalysed reaction is L-glutaminyl-[protein] + H2O = L-glutamyl-[protein] + NH4(+). Probably deamidates glutamine residues to glutamate on methyl-accepting chemotaxis receptors (MCPs), playing an important role in chemotaxis. The chain is Probable chemoreceptor glutamine deamidase CheD from Stenotrophomonas maltophilia (strain K279a).